We begin with the raw amino-acid sequence, 325 residues long: MKNFSLWCDFIENSFLDNEFLNLLSHEINGATSNPAIFKNAILNSPIYKDKILKLKGKKTKDIYEELAISDIQKAADKLAPLFYQKNDGFISIEIDPRLHDNTTLSLGEAKRLYSAIGKENVMIKIPATKASYEVMYELMKNGISVNATLIFSLEQSQKCFEALNAGLVEFRKNNIALKEQNTRTPQAVISIFVSRFDRLLNPKTKEQNRIGILNANLAYNNIYSKNEPNIRALFASTGVKGDNLPKDYYIKELLFENSVNTAPLDAIEAFKGKMDFKKPLMNFEIYTALNQIISQSEREKACNDLLSDGIEQFCIAFEDILKAL.

Lys-125 serves as the catalytic Schiff-base intermediate with substrate.

This sequence belongs to the transaldolase family. Type 2 subfamily.

The protein resides in the cytoplasm. The catalysed reaction is D-sedoheptulose 7-phosphate + D-glyceraldehyde 3-phosphate = D-erythrose 4-phosphate + beta-D-fructose 6-phosphate. Its pathway is carbohydrate degradation; pentose phosphate pathway; D-glyceraldehyde 3-phosphate and beta-D-fructose 6-phosphate from D-ribose 5-phosphate and D-xylulose 5-phosphate (non-oxidative stage): step 2/3. Functionally, transaldolase is important for the balance of metabolites in the pentose-phosphate pathway. This Campylobacter jejuni subsp. doylei (strain ATCC BAA-1458 / RM4099 / 269.97) protein is Transaldolase.